The chain runs to 561 residues: Potassium-transporting ATPase potassium-binding subunit (561 aa).

12 consecutive transmembrane segments (helical) span residues 5–25, 60–80, 86–106, 130–150, 177–197, 247–267, 281–301, 324–344, 376–396, 415–435, 491–511, and 533–553; these read LAAG…YVPV, YGYA…LYFL, VLPL…NTAI, VGLA…AIAL, ILLP…VIQS, PTPL…VCLT, LTLL…TLAA, FGIP…TGAV, GLYG…LLVG, ALSI…TVIL, ICML…AGAL, and GLLT…ALAL.

It belongs to the KdpA family. As to quaternary structure, the system is composed of three essential subunits: KdpA, KdpB and KdpC.

It is found in the cell membrane. Its function is as follows. Part of the high-affinity ATP-driven potassium transport (or Kdp) system, which catalyzes the hydrolysis of ATP coupled with the electrogenic transport of potassium into the cytoplasm. This subunit binds the extracellular potassium ions and delivers the ions to the membrane domain of KdpB through an intramembrane tunnel. This Rhodococcus erythropolis (strain PR4 / NBRC 100887) protein is Potassium-transporting ATPase potassium-binding subunit.